We begin with the raw amino-acid sequence, 695 residues long: Centrosomal protein of 89 kDa (695 aa).

Disordered regions lie at residues Leu-24–Ser-54, Thr-66–Asp-147, and Ala-167–Leu-272. Positions Pro-34 to Pro-49 are enriched in pro residues. Acidic residues-rich tracts occupy residues Asp-124–Glu-146 and Asp-178–Ala-189. Polar residues predominate over residues Gly-209–Ser-226. The span at Thr-251–Val-271 shows a compositional bias: basic and acidic residues. Coiled-coil stretches lie at residues Leu-276–Ala-368 and Ala-406–Glu-632.

It localises to the cytoplasm. Its subcellular location is the cytosol. The protein resides in the cytoskeleton. The protein localises to the microtubule organizing center. It is found in the centrosome. It localises to the spindle pole. Its subcellular location is the centriole. The protein resides in the mitochondrion intermembrane space. Required for ciliogenesis. Also plays a role in mitochondrial metabolism where it may modulate complex IV activity. The protein is Centrosomal protein of 89 kDa (cep89) of Danio rerio (Zebrafish).